The sequence spans 411 residues: Peptidase T (411 aa).

Position 79 (His-79) interacts with Zn(2+). Residue Asp-81 is part of the active site. Asp-142 lines the Zn(2+) pocket. Glu-176 acts as the Proton acceptor in catalysis. Residues Glu-177, Asp-199, and His-381 each coordinate Zn(2+).

Belongs to the peptidase M20B family. It depends on Zn(2+) as a cofactor.

The protein localises to the cytoplasm. It catalyses the reaction Release of the N-terminal residue from a tripeptide.. Its function is as follows. Cleaves the N-terminal amino acid of tripeptides. The protein is Peptidase T of Geobacillus thermodenitrificans (strain NG80-2).